Consider the following 296-residue polypeptide: Light-independent protochlorophyllide reductase iron-sulfur ATP-binding protein (296 aa).

ATP-binding positions include 39–44 (GIGKST) and K68. S43 lines the Mg(2+) pocket. [4Fe-4S] cluster is bound by residues C124 and C158. 209–210 (NR) provides a ligand contact to ATP.

It belongs to the NifH/BchL/ChlL family. In terms of assembly, homodimer. Protochlorophyllide reductase is composed of three subunits; ChlL, ChlN and ChlB. The cofactor is [4Fe-4S] cluster.

It carries out the reaction chlorophyllide a + oxidized 2[4Fe-4S]-[ferredoxin] + 2 ADP + 2 phosphate = protochlorophyllide a + reduced 2[4Fe-4S]-[ferredoxin] + 2 ATP + 2 H2O. The protein operates within porphyrin-containing compound metabolism; chlorophyll biosynthesis (light-independent). In terms of biological role, component of the dark-operative protochlorophyllide reductase (DPOR) that uses Mg-ATP and reduced ferredoxin to reduce ring D of protochlorophyllide (Pchlide) to form chlorophyllide a (Chlide). This reaction is light-independent. The L component serves as a unique electron donor to the NB-component of the complex, and binds Mg-ATP. In Synechococcus sp. (strain CC9605), this protein is Light-independent protochlorophyllide reductase iron-sulfur ATP-binding protein.